The primary structure comprises 76 residues: DNA gyrase inhibitor YacG (76 aa).

Cysteine 7, cysteine 10, cysteine 26, and cysteine 30 together coordinate Zn(2+).

It belongs to the DNA gyrase inhibitor YacG family. In terms of assembly, interacts with GyrB. It depends on Zn(2+) as a cofactor.

Its function is as follows. Inhibits all the catalytic activities of DNA gyrase by preventing its interaction with DNA. Acts by binding directly to the C-terminal domain of GyrB, which probably disrupts DNA binding by the gyrase. This is DNA gyrase inhibitor YacG from Pseudoalteromonas translucida (strain TAC 125).